Here is a 296-residue protein sequence, read N- to C-terminus: Protease HtpX homolog (296 aa).

Transmembrane regions (helical) follow at residues 14 to 34 (VVLL…VGYL) and 39 to 59 (YQFG…SMIF). His143 contacts Zn(2+). The active site involves Glu144. His147 is a binding site for Zn(2+). The next 2 membrane-spanning stretches (helical) occupy residues 158–178 (IAVA…RMLF) and 195–215 (ILVL…ASLV). Residue Glu224 coordinates Zn(2+).

The protein belongs to the peptidase M48B family. The cofactor is Zn(2+).

Its subcellular location is the cell membrane. The polypeptide is Protease HtpX homolog (Streptococcus agalactiae serotype III (strain NEM316)).